The primary structure comprises 359 residues: MSKVCIIGTTTWGITLGTVIAHKGREVMLWARTEDEAALLSAQRRPADFLPEDYYFPEYLNVTASLEEALSGADMVLMAVPSQRMRPNIRLAAPLLTKNMLVCSASKGLEIGTAKRMSQVIADEISPDFSQNICVLSGPNLAMEILKGLPAVTVLAADTEKTAKKAAKLVTASNFCAYTNTDIIGVELGGSLKNIIALGAGIADGLSFGNNAKSALITRGLTEISALGAALGANPLTFSGLAGLGDLIATCSSNLSRNHFVGVELTKGRSLNDIMYSMSNVAEGVSTTAVAYELARSMDLEMPVTENIYNVLYNNADPKEAARKLMAAQAAHELAGRKWDLFKMFRRRRTRKTPELNPD.

4 residues coordinate NADPH: threonine 11, tryptophan 12, arginine 32, and lysine 107. Residues lysine 107 and glycine 138 each contribute to the sn-glycerol 3-phosphate site. Alanine 142 contributes to the NADPH binding site. Sn-glycerol 3-phosphate is bound by residues lysine 193, aspartate 246, serine 256, arginine 257, and asparagine 258. The active-site Proton acceptor is the lysine 193. Residue arginine 257 participates in NADPH binding. Residues valine 281 and glutamate 283 each contribute to the NADPH site.

Belongs to the NAD-dependent glycerol-3-phosphate dehydrogenase family.

It is found in the cytoplasm. It carries out the reaction sn-glycerol 3-phosphate + NAD(+) = dihydroxyacetone phosphate + NADH + H(+). The catalysed reaction is sn-glycerol 3-phosphate + NADP(+) = dihydroxyacetone phosphate + NADPH + H(+). It participates in membrane lipid metabolism; glycerophospholipid metabolism. Catalyzes the reduction of the glycolytic intermediate dihydroxyacetone phosphate (DHAP) to sn-glycerol 3-phosphate (G3P), the key precursor for phospholipid synthesis. This chain is Glycerol-3-phosphate dehydrogenase [NAD(P)+], found in Dehalococcoides mccartyi (strain ATCC BAA-2266 / KCTC 15142 / 195) (Dehalococcoides ethenogenes (strain 195)).